Here is an 832-residue protein sequence, read N- to C-terminus: Mechanosensitive cation channel TMEM63B (832 aa).

The Extracellular segment spans residues 1 to 40 (MLPFLLATLGTTALNNSNPKDYCYSARIRSTVLQGLPFGG). The helical transmembrane segment at 41-65 (VPTVLALDFMCFLALLFLFSILRKV) threads the bilayer. Cys-51 is lipidated: S-palmitoyl cysteine. The Cytoplasmic portion of the chain corresponds to 66-145 (AWDYGRLALV…KDDEIRDKCG (80 aa)). The Mediates endoplasmic reticulum retention motif lies at 86-88 (RDR). Phosphoserine is present on residues Ser-111, Ser-113, Ser-114, and Ser-115. The S-palmitoyl cysteine moiety is linked to residue Cys-126. Residues 146–178 (GDAVHYLSFQRHIIGLLVVVGVLSVGIVLPVNF) form a helical membrane-spanning segment. The Extracellular portion of the chain corresponds to 179 to 202 (SGDLLENNAYSFGRTTIANLKSGN). A helical transmembrane segment spans residues 203 to 227 (NLLWLHTSFAFLYLLLTVYSMRRHT). The Cytoplasmic portion of the chain corresponds to 228–427 (SKMRYKEDDL…IYWEHLSIRG (200 aa)). The tract at residues 231-426 (RYKEDDLVKR…NIYWEHLSIR (196 aa)) is intracellular linker IL2; confers mechanosensitivity. S-palmitoyl cysteine attachment occurs at residues Cys-382 and Cys-398. A helical membrane pass occupies residues 428-457 (FIWWLRCLVINVVLFILLFFLTTPAIIITT). Over 458–472 (MDKFNVTKPVEYLNN) the chain is Extracellular. A glycan (N-linked (GlcNAc...) asparagine) is linked at Asn-462. Residues 473-502 (PIITQFFPTLLLWCFSALLPTIVYYSAFFE) form a helical membrane-spanning segment. At 503-506 (AHWT) the chain is on the cytoplasmic side. The chain crosses the membrane as a helical span at residues 507 to 543 (RSGENRTTMHKCYTFLIFMVLLLPSLGLSSLDLFFRW). The Extracellular portion of the chain corresponds to 544-566 (LFDKKFLAEAAIRFECVFLPDNG). The chain crosses the membrane as a helical span at residues 567–599 (AFFVNYVIASAFIGNAMDLLRIPGLLMYMIRLC). Positions 567–599 (AFFVNYVIASAFIGNAMDLLRIPGLLMYMIRLC) are gating helix. The Cytoplasmic segment spans residues 600–619 (LARSAAERRNVKRHQAYEFQ). A helical transmembrane segment spans residues 620–638 (FGAAYAWMMCVFTVVMTYS). At 639-641 (ITC) the chain is on the extracellular side. The chain crosses the membrane as a helical span at residues 642 to 666 (PIIVPFGLMYMLLKHLVDRYNLYYA). Residues 667–673 (YLPAKLD) are Cytoplasmic-facing. Residues 674-702 (KKIHSGAVNQVVAAPILCLFWLLFFSTMR) traverse the membrane as a helical segment. Residues 703–707 (TGFLA) lie on the Extracellular side of the membrane. The helical transmembrane segment at 708 to 728 (PTSMFTFVVLVITIVICLCHV) threads the bilayer. S-palmitoyl cysteine attachment occurs at residues Cys-726 and Cys-729. The Cytoplasmic segment spans residues 729–832 (CFGHFKYLSA…DSLIENEIHQ (104 aa)). The interval 780 to 814 (EVDGDGDGAPGSSGDEPPSSSSQDEELLMPPDALT) is disordered. Residues 789-801 (PGSSGDEPPSSSS) are compositionally biased toward low complexity.

This sequence belongs to the CSC1 (TC 1.A.17) family. Monomer. Interacts with SLC19A2; interaction is required for the phospholipid scramblase activity. Post-translationally, palmitoylation is required for localization to the plasma membrane and stability. N-Glycosylated.

It localises to the cell membrane. The protein resides in the endoplasmic reticulum membrane. It is found in the lysosome membrane. Its subcellular location is the early endosome membrane. The catalysed reaction is Ca(2+)(in) = Ca(2+)(out). It carries out the reaction Mg(2+)(in) = Mg(2+)(out). The enzyme catalyses K(+)(in) = K(+)(out). It catalyses the reaction Na(+)(in) = Na(+)(out). The catalysed reaction is Cs(+)(in) = Cs(+)(out). It carries out the reaction a 1,2-diacyl-sn-glycero-3-phosphocholine(in) = a 1,2-diacyl-sn-glycero-3-phosphocholine(out). The enzyme catalyses a sphingomyelin(in) = a sphingomyelin(out). Mechanosensitive cation channel with low conductance and high activation threshold. Osmosensitive cation channel preferentially activated by hypotonic stress. Also acts as a phospholipid scramblase in response to changes in membrane structure: upon changes in membrane curvature and thickness, alters its conformation and translocates phospholipids, such as phosphatidylcholine and sphingomyelin, thereby controlling plasma membrane lipid distribution. Forms a heterodimer with SLC19A2, which mediates phospholipid scramblase activity following Ca(2+) stimulation. Expressed in excitatory neurons of the subfornical organ and functions as a thirst receptor that mediates neuronal response to hyperosmolality to drive thirst and drinking behavior. Facilitates intestinal motility by promoting proliferation of intestinal stem cells. Essential for the baby's first breath and respiration throughout life. Upon lung inflation conducts cation currents in alveolar type 1 and 2 cells triggering lamellar body exocytosis and surfactant secretion into airspace. Acts as an osmosensor in cochlear outer hair cells (OHCs) where it mediates calcium influx and regulatory volume decrease response. Required for the maintenance of OHC morphology, OHC survival and normal hearing. This chain is Mechanosensitive cation channel TMEM63B, found in Homo sapiens (Human).